A 226-amino-acid polypeptide reads, in one-letter code: Urease accessory protein UreE (226 aa).

The interval 192–226 (PHGSGLHIHSIHSHGDGHSHDHDHSHGDHDSDHKH) is disordered. The segment covering 204 to 226 (SHGDGHSHDHDHSHGDHDSDHKH) has biased composition (basic and acidic residues).

It belongs to the UreE family.

The protein localises to the cytoplasm. In terms of biological role, involved in urease metallocenter assembly. Binds nickel. Probably functions as a nickel donor during metallocenter assembly. In Yersinia intermedia, this protein is Urease accessory protein UreE.